Consider the following 108-residue polypeptide: Peptidyl-prolyl cis-trans isomerase Fkbp12 (108 aa).

A disordered region spans residues 1–21 (MGVQVVPIAPGDGSTYPKNGQ). The PPIase FKBP-type domain occupies 20–108 (GQKVTVHYTG…TFDVELLKVE (89 aa)).

Belongs to the FKBP-type PPIase family. FKBP1 subfamily.

It is found in the cytoplasm. It carries out the reaction [protein]-peptidylproline (omega=180) = [protein]-peptidylproline (omega=0). In terms of biological role, PPIases accelerate the folding of proteins. It catalyzes the cis-trans isomerization of proline imidic peptide bonds in oligopeptides. Binds to ligand-free TGF beta type I receptor, from which it is released upon a ligand-induced, type II receptor mediated phosphorylation of the type I receptor. Binding is inhibitory to the signaling pathways of the TGF beta family ligands. This is Peptidyl-prolyl cis-trans isomerase Fkbp12 from Drosophila melanogaster (Fruit fly).